Reading from the N-terminus, the 161-residue chain is MKLHELHDNPGANRKKKRVARGPGSGKGKTAGRGIKGQTSRSGVALNGYEGGQMPLYRRLPKRGFSKPNRLEFAVVNLGQLQAFVDAGKLDAKADVTEDALVAAGVIRRKLDGVRVLAKGEIKAALNLSVAGASKAAVEAIEKAGGKITVSRPAKEAAAAE.

The interval 1-47 is disordered; it reads MKLHELHDNPGANRKKKRVARGPGSGKGKTAGRGIKGQTSRSGVALN. The segment covering 23 to 35 has biased composition (gly residues); it reads PGSGKGKTAGRGI.

Belongs to the universal ribosomal protein uL15 family. In terms of assembly, part of the 50S ribosomal subunit.

Its function is as follows. Binds to the 23S rRNA. The protein is Large ribosomal subunit protein uL15 of Paracoccus denitrificans (strain Pd 1222).